Reading from the N-terminus, the 156-residue chain is Small ribosomal subunit protein uS7 (156 aa).

It belongs to the universal ribosomal protein uS7 family. As to quaternary structure, part of the 30S ribosomal subunit. Contacts proteins S9 and S11.

Functionally, one of the primary rRNA binding proteins, it binds directly to 16S rRNA where it nucleates assembly of the head domain of the 30S subunit. Is located at the subunit interface close to the decoding center, probably blocks exit of the E-site tRNA. The sequence is that of Small ribosomal subunit protein uS7 from Shewanella sp. (strain MR-7).